A 466-amino-acid chain; its full sequence is Zinc finger protein NUTCRACKER (466 aa).

A compositionally biased stretch (polar residues) spans 1–23; the sequence is MTSEVLQTISSGSGFAQPQSSST. The tract at residues 1–29 is disordered; it reads MTSEVLQTISSGSGFAQPQSSSTLDHDES. Position 56 is a phosphoserine (Ser-56). The C2H2-type 1 zinc-finger motif lies at 66 to 88; sequence FLCEVCGKGFQRDQNLQLHRRGH. Thr-98 carries the post-translational modification Phosphothreonine; by KIN10. A C2H2-type 2 zinc finger spans residues 107–137; the sequence is YVCPEKTCVHHHSSRALGDLTGIKKHFCRKH. The Nuclear localization signal signature appears at 134-141; the sequence is CRKHGEKK. The segment at 142–165 adopts a C2H2-type 2; degenerate zinc-finger fold; sequence WTCEKCAKRYAVQSDWKAHSKTCG. Positions 144, 147, 160, 164, 171, and 173 each coordinate Zn(2+). The CCHC-type 2; atypical zinc finger occupies 169-192; the sequence is YRCDCGTIFSRRDSFITHRAFCDA. Phosphoserine; by KIN10 is present on residues Ser-178 and Ser-182. The segment at 179-191 is SHR-binding; that stretch reads RRDSFITHRAFCD. 2 residues coordinate Zn(2+): His-186 and Cys-190.

In terms of assembly, interacts with AKIN10. Post-translationally, inhibition of transcription factor activity by KIN10-mediated phosphorylation at Thr-98, Ser-178 and Ser-182 under sugar deprivation conditions, thus delaying flowering. Highly expressed in vegetative organs and at lower levels in flowers and siliques. Expressed predominantly in roots. In roots, present in cortex, endodermis, and pericycle layer.

It is found in the nucleus. Its function is as follows. Transcription activator that binds to the DNA sequence 5'-CTTTTGTCC-3'. Regulates photoperiodic flowering by modulating sugar transport and metabolism. Regulates SUS1 and SUS4. Transcription factor that regulates tissue boundaries and asymmetric cell division. Contributes to the sequestration of 'SHORT-ROOT' to the nucleus. The chain is Zinc finger protein NUTCRACKER from Arabidopsis thaliana (Mouse-ear cress).